Consider the following 430-residue polypeptide: Aspartate aminotransferase, mitochondrial (430 aa).

The transit peptide at methionine 1 to alanine 29 directs the protein to the mitochondrion. Residue threonine 48 is modified to Phosphothreonine. The residue at position 59 (lysine 59) is an N6-acetyllysine. Residue glycine 65 coordinates substrate. At lysine 73 the chain carries N6-acetyllysine; alternate. The residue at position 73 (lysine 73) is an N6-succinyllysine; alternate. Lysine 82 is subject to N6-acetyllysine. Position 90 is an N6-acetyllysine; alternate (lysine 90). Lysine 90 carries the N6-succinyllysine; alternate modification. Tyrosine 96 is subject to 3'-nitrotyrosine; alternate. Tyrosine 96 is subject to Phosphotyrosine; alternate. Lysine 107 and lysine 122 each carry N6-acetyllysine; alternate. Residues lysine 107 and lysine 122 each carry the N6-succinyllysine; alternate modification. Serine 143 carries the phosphoserine modification. Lysine 159 carries the N6-acetyllysine; alternate modification. Lysine 159 is subject to N6-succinyllysine; alternate. Residue tryptophan 162 coordinates substrate. An N6-acetyllysine; alternate modification is found at lysine 185. At lysine 185 the chain carries N6-succinyllysine; alternate. Residue asparagine 215 participates in substrate binding. N6-succinyllysine is present on lysine 227. An N6-acetyllysine modification is found at lysine 234. An N6-acetyllysine; alternate mark is found at lysine 279 and lysine 296. Lysine 279 is modified (N6-(pyridoxal phosphate)lysine; alternate). Lysine 296 carries the post-translational modification N6-succinyllysine; alternate. The residue at position 302 (lysine 302) is an N6-acetyllysine. Lysine 309 carries the post-translational modification N6-acetyllysine; alternate. Lysine 309 is subject to N6-succinyllysine; alternate. Arginine 313 is subject to Asymmetric dimethylarginine. Phosphothreonine is present on threonine 333. Lysine 338 carries the N6-acetyllysine; alternate modification. Residue lysine 338 is modified to N6-succinyllysine; alternate. Position 345 is an N6-acetyllysine (lysine 345). Lysine 363 carries the post-translational modification N6-acetyllysine; alternate. Residue lysine 363 is modified to N6-succinyllysine; alternate. N6-acetyllysine occurs at positions 364 and 387. 2 positions are modified to N6-acetyllysine; alternate: lysine 396 and lysine 404. N6-succinyllysine; alternate occurs at positions 396 and 404. Residue arginine 407 coordinates substrate.

It belongs to the class-I pyridoxal-phosphate-dependent aminotransferase family. In terms of assembly, homodimer. Pyridoxal 5'-phosphate is required as a cofactor.

The protein localises to the mitochondrion matrix. It localises to the cell membrane. It carries out the reaction L-aspartate + 2-oxoglutarate = oxaloacetate + L-glutamate. It catalyses the reaction L-kynurenine + 2-oxoglutarate = kynurenate + L-glutamate + H2O. In terms of biological role, catalyzes the irreversible transamination of the L-tryptophan metabolite L-kynurenine to form kynurenic acid (KA). As a member of the malate-aspartate shuttle, it has a key role in the intracellular NAD(H) redox balance. Is important for metabolite exchange between mitochondria and cytosol, and for amino acid metabolism. Facilitates cellular uptake of long-chain free fatty acids. The protein is Aspartate aminotransferase, mitochondrial of Homo sapiens (Human).